The primary structure comprises 107 residues: Guanine nucleotide-binding protein G(I)/G(S)/G(O) subunit gamma-14 (107 aa).

A G protein gamma domain is found at 69–107 (KMAADLLKFCTEQAKNDPFLVGIPAATNSFKEKKPYAIL).

It belongs to the G protein gamma family. As to quaternary structure, g proteins are composed of 3 units; alpha, beta and gamma.

The protein localises to the cell membrane. In terms of biological role, guanine nucleotide-binding proteins (G proteins) are involved as a modulator or transducer in various transmembrane signaling systems. The beta and gamma chains are required for the GTPase activity, for replacement of GDP by GTP, and for G protein-effector interaction. This Homo sapiens (Human) protein is Guanine nucleotide-binding protein G(I)/G(S)/G(O) subunit gamma-14.